The chain runs to 485 residues: NADH-quinone oxidoreductase subunit N (485 aa).

Transmembrane regions (helical) follow at residues 8-28 (LIALLPLLIVGLTVVVVMLSI), 35-55 (FLNATLSVIGLNAALVSLWFV), 71-91 (GFAMLYTGLVLLASLATCTFA), 105-125 (FYLLVLIASLGGILLTNANHL), 127-147 (ALFLGIELISLPLFGLIGYAF), 159-179 (YTILSAAASSFLLFGMALVYA), 203-223 (LLAGFGLMIVGLGFKLSLVPF), 235-255 (PAPVSTFLATASKIAIFGVVM), 271-291 (VVLGIIAFASIIFGNLMALSQ), 297-317 (LLGYSSISHLGYLLVALIALQ), 326-346 (VGVYLAGYLFSSLGAFGVVSL), 373-393 (AAVMTVMMLSLAGIPMTLGFI), 408-430 (WWLVAAVVVGSAIGLYYYLRVAV), and 455-475 (IVVLISALLVLVLGVWPQPLI).

The protein belongs to the complex I subunit 2 family. As to quaternary structure, NDH-1 is composed of 13 different subunits. Subunits NuoA, H, J, K, L, M, N constitute the membrane sector of the complex.

The protein resides in the cell inner membrane. The enzyme catalyses a quinone + NADH + 5 H(+)(in) = a quinol + NAD(+) + 4 H(+)(out). In terms of biological role, NDH-1 shuttles electrons from NADH, via FMN and iron-sulfur (Fe-S) centers, to quinones in the respiratory chain. The immediate electron acceptor for the enzyme in this species is believed to be ubiquinone. Couples the redox reaction to proton translocation (for every two electrons transferred, four hydrogen ions are translocated across the cytoplasmic membrane), and thus conserves the redox energy in a proton gradient. This Salmonella dublin (strain CT_02021853) protein is NADH-quinone oxidoreductase subunit N.